A 241-amino-acid polypeptide reads, in one-letter code: MADYQYHDVSKMIDHSLLPPTLTEADLDSGIDLAIAYEVASVCILPYYLKRCAAKLAGTGVKASTTIGFPHGGHTTAIKKAEAEQAIQDGCEELDFVVNISQVLSGGWDYVQNEIGEVTELTHAAGQKIKVIFENCYLQDEHKIRLCEICTELKVDWVKTSTGYGTGGATMDDLRLMRQHSGENVQVKAAGGVRDLATLLEVRALGASRCGASRTAEMLGEARKQLGMPAIEITATGSSGY.

The active-site Proton donor/acceptor is the Asp-95. Residue Lys-159 is the Schiff-base intermediate with acetaldehyde of the active site. Lys-188 serves as the catalytic Proton donor/acceptor.

The protein belongs to the DeoC/FbaB aldolase family. DeoC type 1 subfamily.

It localises to the cytoplasm. It carries out the reaction 2-deoxy-D-ribose 5-phosphate = D-glyceraldehyde 3-phosphate + acetaldehyde. Its pathway is carbohydrate degradation; 2-deoxy-D-ribose 1-phosphate degradation; D-glyceraldehyde 3-phosphate and acetaldehyde from 2-deoxy-alpha-D-ribose 1-phosphate: step 2/2. Catalyzes a reversible aldol reaction between acetaldehyde and D-glyceraldehyde 3-phosphate to generate 2-deoxy-D-ribose 5-phosphate. The sequence is that of Deoxyribose-phosphate aldolase from Rhodopirellula baltica (strain DSM 10527 / NCIMB 13988 / SH1).